We begin with the raw amino-acid sequence, 195 residues long: Large ribosomal subunit protein eL18 (195 aa).

A Glycyl lysine isopeptide (Lys-Gly) (interchain with G-Cter in SUMO2) cross-link involves residue K126. At S137 the chain carries Phosphoserine. The interval 158 to 195 is disordered; it reads HFGKAPGTPHSHTKPYVRSKGRKFERARGRRASRGYKN. Position 165 is a phosphothreonine (T165). Composition is skewed to basic residues over residues 168–178 and 185–195; these read SHTKPYVRSKG and RGRRASRGYKN. K171 is covalently cross-linked (Glycyl lysine isopeptide (Lys-Gly) (interchain with G-Cter in SUMO2)).

The protein belongs to the eukaryotic ribosomal protein eL18 family. Component of the large ribosomal subunit.

It is found in the cytoplasm. The protein localises to the cytosol. Its subcellular location is the rough endoplasmic reticulum. Its function is as follows. Component of the large ribosomal subunit. The protein is Large ribosomal subunit protein eL18 (RPL18) of Sus scrofa (Pig).